Reading from the N-terminus, the 100-residue chain is ATP synthase subunit c (100 aa).

Helical transmembrane passes span 30 to 50 (LLYL…GVGM) and 80 to 100 (AFIE…LFVV).

Belongs to the ATPase C chain family. In terms of assembly, F-type ATPases have 2 components, F(1) - the catalytic core - and F(0) - the membrane proton channel. F(1) has five subunits: alpha(3), beta(3), gamma(1), delta(1), epsilon(1). F(0) has three main subunits: a(1), b(2) and c(10-14). The alpha and beta chains form an alternating ring which encloses part of the gamma chain. F(1) is attached to F(0) by a central stalk formed by the gamma and epsilon chains, while a peripheral stalk is formed by the delta and b chains.

It is found in the cell inner membrane. In terms of biological role, f(1)F(0) ATP synthase produces ATP from ADP in the presence of a proton or sodium gradient. F-type ATPases consist of two structural domains, F(1) containing the extramembraneous catalytic core and F(0) containing the membrane proton channel, linked together by a central stalk and a peripheral stalk. During catalysis, ATP synthesis in the catalytic domain of F(1) is coupled via a rotary mechanism of the central stalk subunits to proton translocation. Its function is as follows. Key component of the F(0) channel; it plays a direct role in translocation across the membrane. A homomeric c-ring of between 10-14 subunits forms the central stalk rotor element with the F(1) delta and epsilon subunits. This is ATP synthase subunit c from Aquifex aeolicus (strain VF5).